The chain runs to 61 residues: UPF0181 protein Ent638_2380 (61 aa).

The protein belongs to the UPF0181 family.

This Enterobacter sp. (strain 638) protein is UPF0181 protein Ent638_2380.